The primary structure comprises 591 residues: 2-succinyl-5-enolpyruvyl-6-hydroxy-3-cyclohexene-1-carboxylate synthase (591 aa).

This sequence belongs to the TPP enzyme family. MenD subfamily. As to quaternary structure, homodimer. Requires Mg(2+) as cofactor. The cofactor is Mn(2+). It depends on thiamine diphosphate as a cofactor.

The enzyme catalyses isochorismate + 2-oxoglutarate + H(+) = 5-enolpyruvoyl-6-hydroxy-2-succinyl-cyclohex-3-ene-1-carboxylate + CO2. It participates in quinol/quinone metabolism; 1,4-dihydroxy-2-naphthoate biosynthesis; 1,4-dihydroxy-2-naphthoate from chorismate: step 2/7. Its pathway is cofactor biosynthesis; phylloquinone biosynthesis. Its function is as follows. Catalyzes the thiamine diphosphate-dependent decarboxylation of 2-oxoglutarate and the subsequent addition of the resulting succinic semialdehyde-thiamine pyrophosphate anion to isochorismate to yield 2-succinyl-5-enolpyruvyl-6-hydroxy-3-cyclohexene-1-carboxylate (SEPHCHC). This is 2-succinyl-5-enolpyruvyl-6-hydroxy-3-cyclohexene-1-carboxylate synthase from Rippkaea orientalis (strain PCC 8801 / RF-1) (Cyanothece sp. (strain PCC 8801)).